Consider the following 406-residue polypeptide: Endoplasmic reticulum resident protein 44 (406 aa).

A signal peptide spans 1–29 (MHPAVFLSLPDLRCSLLLLVTWVFTPVTT). One can recognise a Thioredoxin domain in the interval 30–138 (EITSLDTENI…VKALADYIRQ (109 aa)). Disulfide bonds link cysteine 189/cysteine 241 and cysteine 301/cysteine 318. Positions 236–285 (WIQDKCVPLVREITFENGEELTEEGLPFLILFHMKEDTESLEIFQNEVAR) are interaction with ITPR1. Positions 360–387 (FHHGPDPTDTAPGEQAQDVASSPPESSF) are disordered. A compositionally biased stretch (polar residues) spans 377-387 (DVASSPPESSF). Positions 403–406 (RDEL) match the Prevents secretion from ER motif.

In terms of assembly, forms mixed disulfides with both ERO1A and ERO1B and cargo folding intermediates; the interactions with ERO1A and ERO1B result in their retention in the endoplasmic reticulum. Directly interacts with ITPR1 in a pH-, redox state- and calcium-dependent manner, but not with ITPR2 or ITPR3. The strength of this interaction inversely correlates with calcium concentration.

It is found in the endoplasmic reticulum lumen. Mediates thiol-dependent retention in the early secretory pathway, forming mixed disulfides with substrate proteins through its conserved CRFS motif. Inhibits the calcium channel activity of ITPR1. May have a role in the control of oxidative protein folding in the endoplasmic reticulum. Required to retain ERO1A and ERO1B in the endoplasmic reticulum. The polypeptide is Endoplasmic reticulum resident protein 44 (ERP44) (Homo sapiens (Human)).